A 197-amino-acid chain; its full sequence is ATP-dependent Clp protease proteolytic subunit 2 (197 aa).

The Nucleophile role is filled by serine 96. Residue histidine 121 is part of the active site.

This sequence belongs to the peptidase S14 family. In terms of assembly, fourteen ClpP subunits assemble into 2 heptameric rings which stack back to back to give a disk-like structure with a central cavity, resembling the structure of eukaryotic proteasomes.

It localises to the cytoplasm. It catalyses the reaction Hydrolysis of proteins to small peptides in the presence of ATP and magnesium. alpha-casein is the usual test substrate. In the absence of ATP, only oligopeptides shorter than five residues are hydrolyzed (such as succinyl-Leu-Tyr-|-NHMec, and Leu-Tyr-Leu-|-Tyr-Trp, in which cleavage of the -Tyr-|-Leu- and -Tyr-|-Trp bonds also occurs).. Functionally, cleaves peptides in various proteins in a process that requires ATP hydrolysis. Has a chymotrypsin-like activity. Plays a major role in the degradation of misfolded proteins. The protein is ATP-dependent Clp protease proteolytic subunit 2 of Parasynechococcus marenigrum (strain WH8102).